Reading from the N-terminus, the 177-residue chain is 3-isopropylmalate dehydratase small subunit 1 (177 aa).

The segment at Gly-157–Glu-177 is disordered. Low complexity predominate over residues Glu-162–Glu-177.

This sequence belongs to the LeuD family. LeuD type 2 subfamily. As to quaternary structure, heterodimer of LeuC and LeuD.

It catalyses the reaction (2R,3S)-3-isopropylmalate = (2S)-2-isopropylmalate. Its pathway is amino-acid biosynthesis; L-leucine biosynthesis; L-leucine from 3-methyl-2-oxobutanoate: step 2/4. Its function is as follows. Catalyzes the isomerization between 2-isopropylmalate and 3-isopropylmalate, via the formation of 2-isopropylmaleate. The sequence is that of 3-isopropylmalate dehydratase small subunit 1 (leuD1) from Deinococcus radiodurans (strain ATCC 13939 / DSM 20539 / JCM 16871 / CCUG 27074 / LMG 4051 / NBRC 15346 / NCIMB 9279 / VKM B-1422 / R1).